Reading from the N-terminus, the 204-residue chain is Ancillary SecYEG translocon subunit (204 aa).

The Cytoplasmic segment spans residues 1 to 23; that stretch reads MAYTIEEEQELTAIKAWWNENYK. The chain crosses the membrane as a helical span at residues 24–44; that stretch reads FIIVCFVIAFGGVFGWNYWQS. At 45-204 the chain is on the periplasmic side; that stretch reads HQIQKMHKAS…QLIQVRLNNL (160 aa).

Belongs to the YfgM family. As to quaternary structure, interacts with the SecYEG translocon. Forms a complex with PpiD.

The protein localises to the cell inner membrane. Functionally, may mediate protein transfer from the SecYEG translocon to the periplasmic chaperone network via its periplasmic C-terminal region. This chain is Ancillary SecYEG translocon subunit (1057), found in Aggregatibacter actinomycetemcomitans (Actinobacillus actinomycetemcomitans).